The chain runs to 101 residues: Large ribosomal subunit protein bL9m (101 aa).

The transit peptide at 1 to 32 (MSIMKPTTRFFRFNSLELAVSPFQRIYGQLRF) directs the protein to the mitochondrion.

It belongs to the bacterial ribosomal protein bL9 family. Component of the mitochondrial large ribosomal subunit (mt-LSU). Mature yeast 74S mitochondrial ribosomes consist of a small (37S) and a large (54S) subunit. The 37S small subunit contains a 15S ribosomal RNA (15S mt-rRNA) and at least 32 different proteins. The 54S large subunit contains a 21S rRNA (21S mt-rRNA) and at least 45 different proteins.

The protein resides in the mitochondrion. Functionally, component of the mitochondrial ribosome (mitoribosome), a dedicated translation machinery responsible for the synthesis of mitochondrial genome-encoded proteins, including at least some of the essential transmembrane subunits of the mitochondrial respiratory chain. The mitoribosomes are attached to the mitochondrial inner membrane and translation products are cotranslationally integrated into the membrane. This is Large ribosomal subunit protein bL9m from Schizosaccharomyces pombe (strain 972 / ATCC 24843) (Fission yeast).